The sequence spans 389 residues: Chalcone synthase 1 (389 aa).

Cys-164 is an active-site residue.

Belongs to the thiolase-like superfamily. Chalcone/stilbene synthases family.

The catalysed reaction is (E)-4-coumaroyl-CoA + 3 malonyl-CoA + 3 H(+) = 2',4,4',6'-tetrahydroxychalcone + 3 CO2 + 4 CoA. Its pathway is secondary metabolite biosynthesis; flavonoid biosynthesis. Functionally, the primary product of this enzyme is 4,2',4',6'-tetrahydroxychalcone (also termed naringenin-chalcone or chalcone) which can under specific conditions spontaneously isomerize into naringenin. The chain is Chalcone synthase 1 (CHS1) from Medicago sativa (Alfalfa).